Reading from the N-terminus, the 161-residue chain is Disulfide bond formation protein B (161 aa).

The Cytoplasmic portion of the chain corresponds to 1–8 (MQANSRTY). A helical transmembrane segment spans residues 9-25 (FLLIAIVSFAMVGAALY). Residues 26–43 (MQYAENLQPCPLCIMQRF) are Periplasmic-facing. Cysteine 35 and cysteine 38 form a disulfide bridge. Residues 44 to 58 (AFIGIGIFSLLAVIA) form a helical membrane-spanning segment. Over 59 to 63 (QNTRT) the chain is Cytoplasmic. A helical membrane pass occupies residues 64–81 (LWQGLGMLSGVGGIAVAG). Residues 82–136 (YQVALLMNPKASCGIDPLENWVNSLPTAKLLPQVFYSDGLCTAPTPPILGLSIPA) are Periplasmic-facing. Cysteine 94 and cysteine 122 are joined by a disulfide. A helical membrane pass occupies residues 137–155 (WSLIWLLILTLTLAVGLIR). The Cytoplasmic segment spans residues 156 to 161 (REKHFR).

The protein belongs to the DsbB family.

The protein resides in the cell inner membrane. Functionally, required for disulfide bond formation in some periplasmic proteins. Acts by oxidizing the DsbA protein. The polypeptide is Disulfide bond formation protein B (Cupriavidus metallidurans (strain ATCC 43123 / DSM 2839 / NBRC 102507 / CH34) (Ralstonia metallidurans)).